Reading from the N-terminus, the 177-residue chain is uncharacterized protein (177 aa).

Its subcellular location is the plastid. The protein localises to the chloroplast. This is an uncharacterized protein from Chlorella vulgaris (Green alga).